The following is a 353-amino-acid chain: Mitochondrial distribution and morphology protein 12 (353 aa).

The SMP-LTD domain maps to 1–330 (MSFDIKWENL…WPSWICLDMN (330 aa)). 3 stretches are compositionally biased toward acidic residues: residues 64 to 75 (DEFYEDTTDSPE), 84 to 103 (TGDDDDDDDDDEDDESDDDG), and 330 to 342 (NDDDEEEEEEENP). Disordered regions lie at residues 64–140 (DEFY…NRSR) and 330–353 (NDDDEEEEEEENPSESSSTTHVGS).

It belongs to the MDM12 family. In terms of assembly, component of the ER-mitochondria encounter structure (ERMES) or MDM complex, composed of MMM1, MDM10, MDM12 and MDM34. An MMM1 homodimer associates with one molecule of MDM12 on each side in a pairwise head-to-tail manner, and the SMP-LTD domains of MMM1 and MDM12 generate a continuous hydrophobic tunnel for phospholipid trafficking.

Its subcellular location is the mitochondrion outer membrane. It localises to the endoplasmic reticulum membrane. In terms of biological role, component of the ERMES/MDM complex, which serves as a molecular tether to connect the endoplasmic reticulum (ER) and mitochondria. Components of this complex are involved in the control of mitochondrial shape and protein biogenesis, and function in nonvesicular lipid trafficking between the ER and mitochondria. MDM12 is required for the interaction of the ER-resident membrane protein MMM1 and the outer mitochondrial membrane-resident beta-barrel protein MDM10. The MDM12-MMM1 subcomplex functions in the major beta-barrel assembly pathway that is responsible for biogenesis of all mitochondrial outer membrane beta-barrel proteins, and acts in a late step after the SAM complex. The MDM10-MDM12-MMM1 subcomplex further acts in the TOM40-specific pathway after the action of the MDM12-MMM1 complex. Essential for establishing and maintaining the structure of mitochondria and maintenance of mtDNA nucleoids. The chain is Mitochondrial distribution and morphology protein 12 from Candida tropicalis (strain ATCC MYA-3404 / T1) (Yeast).